A 421-amino-acid polypeptide reads, in one-letter code: Cyclin-A1 (421 aa).

Residues 1–21 (MHRQSSKSGVALPPVGQGPDA) are disordered.

The protein belongs to the cyclin family. Cyclin AB subfamily. Interacts with INCA1 and KLHDC9. Interacts with the CDK2 and CDC2 protein kinases to form a serine/threonine kinase holoenzyme complex. The cyclin subunit imparts substrate specificity to the complex. Found in a complex with CDK2, CABLES1 and CCNE1. In terms of processing, polyubiquitinated via 'Lys-11'-linked ubiquitin by the anaphase-promoting complex (APC/C), leading to its degradation by the proteasome. Deubiquitinated and stabilized by USP37 enables entry into S phase. Ubiquitinated during the G1 phase by the SCF(FBXO31) complex, leading to its proteasomal degradation. As to expression, testis and ovaries.

It is found in the nucleus. The protein resides in the cytoplasm. The protein localises to the cytoskeleton. Its subcellular location is the spindle. Its function is as follows. May be involved in the control of the cell cycle at the G1/S (start) and G2/M (mitosis) transitions. May primarily function in the control of the germline meiotic cell cycle and additionally in the control of mitotic cell cycle in some somatic cells. This is Cyclin-A1 (Ccna1) from Mus musculus (Mouse).